The chain runs to 605 residues: Endonuclease 8-like 3 (605 aa).

The active-site Schiff-base intermediate with DNA; via amino nitrogen is Val2. Asn192 and Arg271 together coordinate DNA. The segment at Lys247–Lys281 adopts an FPG-type zinc-finger fold. The RanBP2-type zinc finger occupies Ser317–Ile346. Ser450 is subject to Phosphoserine. The tract at residues Glu456 to Leu477 is disordered. Positions 507, 510, 533, 541, 554, 556, 579, and 587 each coordinate Zn(2+). 2 GRF-type zinc fingers span residues Cys507–Ser550 and Cys554–Gly596.

It belongs to the FPG family. As to expression, expressed in keratinocytes and embryonic fibroblasts (at protein level). Also detected in thymus, testis and fetal lung primary fibroblasts.

The protein resides in the nucleus. It is found in the chromosome. It catalyses the reaction 2'-deoxyribonucleotide-(2'-deoxyribose 5'-phosphate)-2'-deoxyribonucleotide-DNA = a 3'-end 2'-deoxyribonucleotide-(2,3-dehydro-2,3-deoxyribose 5'-phosphate)-DNA + a 5'-end 5'-phospho-2'-deoxyribonucleoside-DNA + H(+). DNA glycosylase which prefers single-stranded DNA (ssDNA), or partially ssDNA structures such as bubble and fork structures, to double-stranded DNA (dsDNA). Mediates interstrand cross-link repair in response to replication stress: acts by mediating DNA glycosylase activity, cleaving one of the two N-glycosyl bonds comprising the interstrand cross-link, which avoids the formation of a double-strand break but generates an abasic site that is bypassed by translesion synthesis polymerases. In vitro, displays strong glycosylase activity towards the hydantoin lesions spiroiminodihydantoin (Sp) and guanidinohydantoin (Gh) in both ssDNA and dsDNA; also recognizes FapyA, FapyG, 5-OHU, 5-OHC, 5-OHMH, Tg and 8-oxoA lesions in ssDNA. No activity on 8-oxoG detected. Also shows weak DNA-(apurinic or apyrimidinic site) lyase activity. In vivo, appears to be the primary enzyme involved in removing Sp and Gh from ssDNA in neonatal tissues. This is Endonuclease 8-like 3 (NEIL3) from Homo sapiens (Human).